A 553-amino-acid polypeptide reads, in one-letter code: Membrane protein insertase YidC (553 aa).

Transmembrane regions (helical) follow at residues 7-24 (VLWVIFFMSAVMLYDNWQ), 365-385 (WGWAIVLLTVLIKAVFFPLSA), 435-455 (LPVVIQIPVFISLYWVLLASV), 474-494 (PFFILPVLMAVSMFVQTSLNP), and 509-529 (PIAFSVMFFFFPAGLVLYYVV).

It belongs to the OXA1/ALB3/YidC family. Type 1 subfamily. In terms of assembly, interacts with the Sec translocase complex via SecD. Specifically interacts with transmembrane segments of nascent integral membrane proteins during membrane integration.

It localises to the cell inner membrane. Functionally, required for the insertion and/or proper folding and/or complex formation of integral membrane proteins into the membrane. Involved in integration of membrane proteins that insert both dependently and independently of the Sec translocase complex, as well as at least some lipoproteins. Aids folding of multispanning membrane proteins. This is Membrane protein insertase YidC from Burkholderia orbicola (strain MC0-3).